The primary structure comprises 208 residues: MIGNTKIKSLLEEGLTAFQLDAIGDLLLDFLLLLNKWNKTYNLTAIRDIETMVSKHLFDSLAILPWIKGNHIIDVGTGPGLPGIPLAIAKPDLQFVLLDSNGKKISFLNEVKRQLNIKNIEPIQIRVENYHPNQGFDTVISRAFSSLEQMIKWTEHLVAQDGLWLAMKGRFPDTELVPIHQTYRVERYAVPGIEGERCCVLINNTNKE.

Residues G76, L81, 127-128, and R142 contribute to the S-adenosyl-L-methionine site; that span reads VE.

The protein belongs to the methyltransferase superfamily. RNA methyltransferase RsmG family.

Its subcellular location is the cytoplasm. The enzyme catalyses guanosine(527) in 16S rRNA + S-adenosyl-L-methionine = N(7)-methylguanosine(527) in 16S rRNA + S-adenosyl-L-homocysteine. Functionally, specifically methylates the N7 position of guanine in position 527 of 16S rRNA. This Legionella pneumophila (strain Corby) protein is Ribosomal RNA small subunit methyltransferase G.